Here is a 72-residue protein sequence, read N- to C-terminus: Large ribosomal subunit protein bL31 (72 aa).

It belongs to the bacterial ribosomal protein bL31 family. Type A subfamily. In terms of assembly, part of the 50S ribosomal subunit.

Binds the 23S rRNA. In Maricaulis maris (strain MCS10) (Caulobacter maris), this protein is Large ribosomal subunit protein bL31.